A 154-amino-acid polypeptide reads, in one-letter code: Ribonuclease 8 (154 aa).

The N-terminal stretch at Met-1–Ala-27 is a signal peptide. His-42 (proton acceptor) is an active-site residue. Cystine bridges form between Cys-64/Cys-118 and Cys-89/Cys-96. Residues Lys-65 to Thr-69 and Lys-90 contribute to the substrate site. His-149 functions as the Proton donor in the catalytic mechanism.

Belongs to the pancreatic ribonuclease family.

The protein localises to the secreted. Has a low ribonuclease activity. The polypeptide is Ribonuclease 8 (RNASE8) (Chlorocebus aethiops (Green monkey)).